The chain runs to 361 residues: DNA replication and repair protein RecF (361 aa).

Residue glycine 30–threonine 37 participates in ATP binding.

This sequence belongs to the RecF family.

It localises to the cytoplasm. Its function is as follows. The RecF protein is involved in DNA metabolism; it is required for DNA replication and normal SOS inducibility. RecF binds preferentially to single-stranded, linear DNA. It also seems to bind ATP. This is DNA replication and repair protein RecF from Pectobacterium atrosepticum (strain SCRI 1043 / ATCC BAA-672) (Erwinia carotovora subsp. atroseptica).